Reading from the N-terminus, the 253-residue chain is UPF0174 protein jhp_1494 (253 aa).

The protein belongs to the UPF0174 family.

This Helicobacter pylori (strain J99 / ATCC 700824) (Campylobacter pylori J99) protein is UPF0174 protein jhp_1494.